The chain runs to 329 residues: MRRLPLLEVSQLKMHFDAGKKRTVKAVDGVTFQIREGETFGLVGESGCGKSTLGRVLMRLYQPTEGSVTYRGTNLHALSEKEQFAFNRKLQMIFQDPYASLNPRMTVREIILEPMEIHNLYNTHKARLLVVDELLEAVGLHPDFGSRYPHEFSGGQRQRIGIARALSLNPEFIVADEPISALDVSVQAQVVNLLKRLQKEKGLTFLFIAHDLSMVKHISDRIGVMYLGHMMEITESGTLYREPLHPYTKALLSSIPIPDPELEDKRERILLKGELPSPVNPPSGCVFRTRCPEAMPECGESRPQLQEIEPGRFVACHLYRNAETKEKVR.

One can recognise an ABC transporter domain in the interval 7–252 (LEVSQLKMHF…PLHPYTKALL (246 aa)). 44–51 (GESGCGKS) provides a ligand contact to ATP.

It belongs to the ABC transporter superfamily.

This chain is Putative oligopeptide transport ATP-binding protein YkfD (ykfD), found in Bacillus subtilis (strain 168).